The sequence spans 422 residues: Probable tRNA pseudouridine synthase D (422 aa).

The Nucleophile role is filled by Asp-83. Residues 164–386 (GFPNYFGSQR…AGGRRELLIK (223 aa)) enclose the TRUD domain.

This sequence belongs to the pseudouridine synthase TruD family.

The catalysed reaction is uridine(13) in tRNA = pseudouridine(13) in tRNA. In terms of biological role, could be responsible for synthesis of pseudouridine from uracil-13 in transfer RNAs. The sequence is that of Probable tRNA pseudouridine synthase D from Thermococcus sibiricus (strain DSM 12597 / MM 739).